A 316-amino-acid chain; its full sequence is Biotin synthase (316 aa).

The Radical SAM core domain occupies 39–263 (NAIQCSTLLS…LFPKAYVRLS (225 aa)). The [4Fe-4S] cluster site is built by cysteine 54, cysteine 58, and cysteine 61. The [2Fe-2S] cluster site is built by cysteine 98, cysteine 129, cysteine 189, and arginine 261.

Belongs to the radical SAM superfamily. Biotin synthase family. Homodimer. [4Fe-4S] cluster serves as cofactor. The cofactor is [2Fe-2S] cluster.

It carries out the reaction (4R,5S)-dethiobiotin + (sulfur carrier)-SH + 2 reduced [2Fe-2S]-[ferredoxin] + 2 S-adenosyl-L-methionine = (sulfur carrier)-H + biotin + 2 5'-deoxyadenosine + 2 L-methionine + 2 oxidized [2Fe-2S]-[ferredoxin]. The protein operates within cofactor biosynthesis; biotin biosynthesis; biotin from 7,8-diaminononanoate: step 2/2. In terms of biological role, catalyzes the conversion of dethiobiotin (DTB) to biotin by the insertion of a sulfur atom into dethiobiotin via a radical-based mechanism. In Acidithiobacillus ferrooxidans (strain ATCC 23270 / DSM 14882 / CIP 104768 / NCIMB 8455) (Ferrobacillus ferrooxidans (strain ATCC 23270)), this protein is Biotin synthase.